The primary structure comprises 200 residues: Holliday junction branch migration complex subunit RuvA (200 aa).

Residues 1–63 (MYAYVKGKLT…EDAQLLYGFS (63 aa)) are domain I. Positions 64-142 (SEEEKDMFLS…ITEEDSDSLL (79 aa)) are domain II. The tract at residues 143-149 (QVDATST) is flexible linker. Positions 150–200 (EQDQFVQEAMLALEALGYSKRELAKVEKTLNKNKYDSVDEAVKAGLQLVVS) are domain III.

This sequence belongs to the RuvA family. As to quaternary structure, homotetramer. Forms an RuvA(8)-RuvB(12)-Holliday junction (HJ) complex. HJ DNA is sandwiched between 2 RuvA tetramers; dsDNA enters through RuvA and exits via RuvB. An RuvB hexamer assembles on each DNA strand where it exits the tetramer. Each RuvB hexamer is contacted by two RuvA subunits (via domain III) on 2 adjacent RuvB subunits; this complex drives branch migration. In the full resolvosome a probable DNA-RuvA(4)-RuvB(12)-RuvC(2) complex forms which resolves the HJ.

Its subcellular location is the cytoplasm. Its function is as follows. The RuvA-RuvB-RuvC complex processes Holliday junction (HJ) DNA during genetic recombination and DNA repair, while the RuvA-RuvB complex plays an important role in the rescue of blocked DNA replication forks via replication fork reversal (RFR). RuvA specifically binds to HJ cruciform DNA, conferring on it an open structure. The RuvB hexamer acts as an ATP-dependent pump, pulling dsDNA into and through the RuvAB complex. HJ branch migration allows RuvC to scan DNA until it finds its consensus sequence, where it cleaves and resolves the cruciform DNA. This chain is Holliday junction branch migration complex subunit RuvA, found in Staphylococcus aureus (strain MRSA252).